Reading from the N-terminus, the 233-residue chain is uncharacterized protein (233 aa).

The Zn(2+) site is built by histidine 64, histidine 66, aspartate 68, histidine 69, histidine 143, aspartate 162, and histidine 212.

Belongs to the metallo-beta-lactamase superfamily. Glyoxalase II family. Zn(2+) serves as cofactor.

This is an uncharacterized protein from Bacillus subtilis (strain 168).